The following is a 356-amino-acid chain: Uroporphyrinogen decarboxylase (356 aa).

Substrate is bound by residues 25–29 (RQAGR), D75, Y152, T207, and H326.

It belongs to the uroporphyrinogen decarboxylase family. Homodimer.

The protein resides in the cytoplasm. It catalyses the reaction uroporphyrinogen III + 4 H(+) = coproporphyrinogen III + 4 CO2. It functions in the pathway porphyrin-containing compound metabolism; protoporphyrin-IX biosynthesis; coproporphyrinogen-III from 5-aminolevulinate: step 4/4. In terms of biological role, catalyzes the decarboxylation of four acetate groups of uroporphyrinogen-III to yield coproporphyrinogen-III. In Magnetococcus marinus (strain ATCC BAA-1437 / JCM 17883 / MC-1), this protein is Uroporphyrinogen decarboxylase.